Reading from the N-terminus, the 1215-residue chain is von Willebrand factor A domain-containing protein 5B1 (1215 aa).

The signal sequence occupies residues 1–18 (MPGLLNCLTGAALPLMES). The 123-residue stretch at 19-141 (DVTSYVSGYA…NVTVFISTSS (123 aa)) folds into the VIT domain. The N-linked (GlcNAc...) asparagine glycan is linked to Asn132. One can recognise a VWFA domain in the interval 353–532 (EFIFLIDRSN…KAMAPVLSDV (180 aa)). The disordered stretch occupies residues 595 to 674 (SVFYPSQDEG…DPTGTARRYP (80 aa)). Polar residues-rich tracts occupy residues 608–621 (GSGN…QGQT) and 646–667 (YSTN…SDPT). A Phosphotyrosine modification is found at Tyr879. 3 disordered regions span residues 934 to 953 (GSSA…SSAA), 964 to 999 (QDSP…APSS), and 1100 to 1121 (SPQD…SLKS). Polar residues-rich tracts occupy residues 964 to 975 (QDSPTSTFNKTP), 990 to 999 (QNLSASAPSS), and 1100 to 1112 (SPQD…SSPP).

The protein localises to the secreted. The chain is von Willebrand factor A domain-containing protein 5B1 (Vwa5b1) from Mus musculus (Mouse).